The primary structure comprises 526 residues: MASSFQLYKALLFFSSLLSAVQAQKVGTQQAEVHPGLTWQTCTSSGSCTTVNGEVTIDANWRWLHTVNGYTNCYTGNEWDTSICTSNEVCAEQCAVDGANYASTYGITTSGSSLRLNFVTQSQQKNIGSRVYLMDDEDTYTMFYLLNKEFTFDVDVSELPCGLNGAVYFVSMDADGGKSRYATNEAGAKYGTGYCDSQCPRDLKFINGVANVEGWESSDTNPNGGVGNHGSCCAEMDIWEANSISTAFTPHPCDTPGQTLCTGDSCGGTYSNDRYGGTCDPDGCDFNSYRQGNKTFYGPGLTVDTNSPVTVVTQFLTDDNTDTGTLSEIKRFYVQNGVVIPNSESTYPANPGNSITTEFCESQKELFGDVDVFSAHGGMAGMGAALEQGMVLVLSLWDDNYSNMLWLDSNYPTDADPTQPGIARGTCPTDSGVPSEVEAQYPNAYVVYSNIKFGPIGSTFGNGGGSGPTTTVTTSTATSTTSSATSTATGQAQHWEQCGGNGWTGPTVCASPWACTVVNSWYSQCL.

A signal peptide spans 1–23; it reads MASSFQLYKALLFFSSLLSAVQA. The tract at residues 24–458 is catalytic; that stretch reads QKVGTQQAEV…SNIKFGPIGS (435 aa). Glu235 (nucleophile) is an active-site residue. Catalysis depends on Glu240, which acts as the Proton donor. Residues Asn293 and Asn400 are each glycosylated (N-linked (GlcNAc...) asparagine). The interval 459 to 490 is ser/Thr-rich linker; sequence TFGNGGGSGPTTTVTTSTATSTTSSATSTATG. Positions 464–488 are disordered; sequence GGSGPTTTVTTSTATSTTSSATSTA. Low complexity predominate over residues 468-488; sequence PTTTVTTSTATSTTSSATSTA. The region spanning 490–526 is the CBM1 domain; sequence GQAQHWEQCGGNGWTGPTVCASPWACTVVNSWYSQCL. Disulfide bonds link Cys498/Cys515 and Cys509/Cys525.

It belongs to the glycosyl hydrolase 7 (cellulase C) family.

The protein localises to the secreted. It catalyses the reaction Hydrolysis of (1-&gt;4)-beta-D-glucosidic linkages in cellulose and cellotetraose, releasing cellobiose from the non-reducing ends of the chains.. The biological conversion of cellulose to glucose generally requires three types of hydrolytic enzymes: (1) Endoglucanases which cut internal beta-1,4-glucosidic bonds; (2) Exocellobiohydrolases that cut the disaccharide cellobiose from the non-reducing end of the cellulose polymer chain; (3) Beta-1,4-glucosidases which hydrolyze the cellobiose and other short cello-oligosaccharides to glucose. The sequence is that of 1,4-beta-D-glucan cellobiohydrolase B (cbhB) from Emericella nidulans (strain FGSC A4 / ATCC 38163 / CBS 112.46 / NRRL 194 / M139) (Aspergillus nidulans).